The following is a 180-amino-acid chain: SAGA-associated factor 11 homolog (180 aa).

The segment at 98-119 (CSCPNCNRIVAASRFAPHLEKC) adopts an SGF11-type zinc-finger fold. Positions 138–180 (RDGGNYFGADEDDEDDADWSGEKRKKKIAPVRTNGSKKNGKTS) are disordered. Residues 146-156 (ADEDDEDDADW) are compositionally biased toward acidic residues.

The protein belongs to the SGF11 family. Component of some SAGA transcription coactivator-HAT complexes. Within the SAGA complex, participates in a subcomplex of SAGA called the DUB module (deubiquitination module).

It is found in the nucleus. Its function is as follows. Component of the transcription regulatory histone acetylation (HAT) complex SAGA, a multiprotein complex that activates transcription by remodeling chromatin and mediating histone acetylation and deubiquitination. Within the SAGA complex, participates in a subcomplex that specifically deubiquitinates histone H2B. The SAGA complex is recruited to specific gene promoters by activators, where it is required for transcription. The chain is SAGA-associated factor 11 homolog from Aedes aegypti (Yellowfever mosquito).